The chain runs to 407 residues: Subtilisin-like protease CPC735_013710 (407 aa).

The N-terminal stretch at 1 to 17 is a signal peptide; the sequence is MQLLNLSLFFLLPFATA. A propeptide spanning residues 18–115 is cleaved from the precursor; sequence NPIPQDSQNI…VLPDQKIYLA (98 aa). The region spanning 31-114 is the Inhibitor I9 domain; it reads QYIVTLKDGL…SVLPDQKIYL (84 aa). The region spanning 124–407 is the Peptidase S8 domain; the sequence is GWNLGYMSSK…VAYNGIQEML (284 aa). N-linked (GlcNAc...) asparagine glycosylation occurs at asparagine 145. Catalysis depends on charge relay system residues aspartate 162 and histidine 194. N-linked (GlcNAc...) asparagine glycosylation is found at asparagine 241, asparagine 254, and asparagine 341. Serine 350 (charge relay system) is an active-site residue. Asparagine 381 carries N-linked (GlcNAc...) asparagine glycosylation.

Belongs to the peptidase S8 family.

The protein localises to the secreted. Functionally, secreted subtilisin-like serine protease with keratinolytic activity that contributes to pathogenicity. The protein is Subtilisin-like protease CPC735_013710 of Coccidioides posadasii (strain C735) (Valley fever fungus).